A 711-amino-acid polypeptide reads, in one-letter code: RB-associated KRAB zinc finger protein (711 aa).

The KRAB domain maps to 8–79 (LSFKDVAVAF…EGDRHAQRHL (72 aa)). Residues K97 and K256 each participate in a glycyl lysine isopeptide (Lys-Gly) (interchain with G-Cter in SUMO2) cross-link. The interval 170 to 257 (AYGESLEDFN…YPRSQMELKP (88 aa)) is required for interaction with RB1. C2H2-type zinc fingers lie at residues 258-280 (FECT…QRAH) and 286-308 (YACS…RRSH). Residue K312 forms a Glycyl lysine isopeptide (Lys-Gly) (interchain with G-Cter in SUMO2) linkage. 6 consecutive C2H2-type zinc fingers follow at residues 314-336 (YKCN…QRTH), 342-364 (YECS…QRNH), 370-392 (YPCN…QRTH), 398-420 (YKCN…QRTH), 426-448 (YQCS…YRSH), and 454-476 (YECT…WKVH). K354 participates in a covalent cross-link: Glycyl lysine isopeptide (Lys-Gly) (interchain with G-Cter in SUMO2). The segment at 414–711 (ITHQRTHTGE…TVNVLTVEKL (298 aa)) is interaction with AR. The C2H2-type 9; degenerate zinc finger occupies 508–530 (YECNECGKTFLDSSAFHRHQSVP). K534 participates in a covalent cross-link: Glycyl lysine isopeptide (Lys-Gly) (interchain with G-Cter in SUMO2). 6 C2H2-type zinc fingers span residues 536 to 558 (YECN…YRGH), 564 to 586 (FGCS…QRVH), 592 to 614 (YECY…HRIH), 620 to 642 (YECS…YRSH), 648 to 670 (YECN…YRTH), and 676 to 698 (YECN…QRIH).

The protein belongs to the krueppel C2H2-type zinc-finger protein family. As to quaternary structure, interacts with AR. May also interact with other nuclear hormone receptors such as NR3C1/GR. Interacts with RB1.

It is found in the nucleus. Its function is as follows. May repress E2F-dependent transcription. May promote AR-dependent transcription. In Mus musculus (Mouse), this protein is RB-associated KRAB zinc finger protein (Rbak).